A 367-amino-acid polypeptide reads, in one-letter code: NAD(P)H-quinone oxidoreductase subunit 1, chloroplastic (367 aa).

Helical transmembrane passes span 30 to 50 (LFPI…IVWL), 98 to 118 (FSIG…VIPF), 127 to 147 (LSIG…GLLM), 164 to 184 (AAAQ…SISL), 273 to 293 (LFVT…IFVP), 304 to 324 (VFGT…FLFI), and 340 to 360 (LLNL…LLTT).

This sequence belongs to the complex I subunit 1 family. NDH is composed of at least 16 different subunits, 5 of which are encoded in the nucleus.

It localises to the plastid. It is found in the chloroplast thylakoid membrane. It catalyses the reaction a plastoquinone + NADH + (n+1) H(+)(in) = a plastoquinol + NAD(+) + n H(+)(out). The enzyme catalyses a plastoquinone + NADPH + (n+1) H(+)(in) = a plastoquinol + NADP(+) + n H(+)(out). Functionally, NDH shuttles electrons from NAD(P)H:plastoquinone, via FMN and iron-sulfur (Fe-S) centers, to quinones in the photosynthetic chain and possibly in a chloroplast respiratory chain. The immediate electron acceptor for the enzyme in this species is believed to be plastoquinone. Couples the redox reaction to proton translocation, and thus conserves the redox energy in a proton gradient. This chain is NAD(P)H-quinone oxidoreductase subunit 1, chloroplastic, found in Nicotiana tabacum (Common tobacco).